The following is a 200-amino-acid chain: Superoxide dismutase [Fe] (200 aa).

Histidine 28, histidine 80, aspartate 162, and histidine 166 together coordinate Fe cation.

This sequence belongs to the iron/manganese superoxide dismutase family. In terms of assembly, homodimer. The cofactor is Fe cation.

The catalysed reaction is 2 superoxide + 2 H(+) = H2O2 + O2. Destroys superoxide anion radicals which are normally produced within the cells and which are toxic to biological systems. This chain is Superoxide dismutase [Fe] (sodB), found in Nostoc sp. (strain PCC 7120 / SAG 25.82 / UTEX 2576).